The following is a 565-amino-acid chain: NAD-dependent malic enzyme (565 aa).

Y103 (proton donor) is an active-site residue. Catalysis depends on K177, which acts as the Proton acceptor. E248, D249, and D272 together coordinate a divalent metal cation. D272 and N419 together coordinate NAD(+). Residue S445 is modified to Phosphoserine.

Belongs to the malic enzymes family. The cofactor is Mg(2+). It depends on Mn(2+) as a cofactor.

It catalyses the reaction (S)-malate + NAD(+) = pyruvate + CO2 + NADH. The enzyme catalyses oxaloacetate + H(+) = pyruvate + CO2. In Schizosaccharomyces pombe (strain 972 / ATCC 24843) (Fission yeast), this protein is NAD-dependent malic enzyme (mae2).